The primary structure comprises 381 residues: MGGLRFGFVDALVHSRLPPTLPARSSMAAATVMGADSYWVGDHLNALVPRSIATSEYLGIAAKFVPKIDANYEPWTMLGNLAFGLPSRLRLGVCVTDAGRRNPAVTAQAAATLHLLTRGRAILGIGVGEREGNEPYGVEWTKPVARFEEALATIRALWNSNGELISRESPYFPLHNALFDLPPYRGKWPEIWVAAHGPRMLRATGRYADAWIPIVVVRPSDYSRALEAVRSAASDAGRDPMSITPAAVRGIITGRNRDDVEEALESVVVKMTALGVPGEAWARHGVEHPMGADFSGVQDIIPQTMDKQTVLSYAAKVPAALMKEVVFSGTPDEVIDQVAEWRDHGLRYVVLINGSLVNPSLRKTVTAVLPHAKVLRGLKKL.

This sequence belongs to the mer family. Phthiodiolone/phenolphthiodiolone dimycocerosates ketoreductase subfamily.

Its function is as follows. Catalyzes the reduction of the keto moiety of phthiodiolone dimycocerosates (DIM B) and glycosylated phenolphthiodiolone dimycocerosates to form the intermediate compounds phthiotriol and glycosylated phenolphthiotriol dimycocerosates during phthiocerol dimycocerosates (DIM A) and glycosylated phenolphthiocerol dimycocerosates (PGL) biosynthesis. The protein is Phthiodiolone/phenolphthiodiolone dimycocerosates ketoreductase of Mycobacterium bovis (strain ATCC BAA-935 / AF2122/97).